The following is a 161-amino-acid chain: Allophycocyanin alpha chain (161 aa).

Position 71 is an N4-methylasparagine (asparagine 71). A (2R,3E)-phycocyanobilin-binding site is contributed by cysteine 81.

This sequence belongs to the phycobiliprotein family. As to quaternary structure, heterodimer of an alpha and a beta chain. Post-translationally, contains one covalently linked phycocyanobilin chromophore.

The protein localises to the cellular thylakoid membrane. Functionally, light-harvesting photosynthetic bile pigment-protein from the phycobiliprotein complex. Allophycocyanin has a maximum absorption at approximately 650 nanometers. The polypeptide is Allophycocyanin alpha chain (apcA) (Synechocystis sp. (strain PCC 6714) (Aphanocapsa sp. (strain PCC 6714))).